The following is a 513-amino-acid chain: Xylose import ATP-binding protein XylG (513 aa).

ABC transporter domains lie at Leu5–Glu242 and Leu259–Glu505. ATP is bound at residue Gly37 to Ser44.

It belongs to the ABC transporter superfamily. Xylose importer (TC 3.A.1.2.4) family. In terms of assembly, the complex is composed of two ATP-binding proteins (XylG), two transmembrane proteins (XylH) and a solute-binding protein (XylF).

It is found in the cell inner membrane. The enzyme catalyses D-xylose(out) + ATP + H2O = D-xylose(in) + ADP + phosphate + H(+). Functionally, part of the ABC transporter complex XylFGH involved in xylose import. Responsible for energy coupling to the transport system. The polypeptide is Xylose import ATP-binding protein XylG (Escherichia coli (strain UTI89 / UPEC)).